The chain runs to 429 residues: Adenylosuccinate synthetase (429 aa).

GTP contacts are provided by residues 12–18 (GDEGKGK) and 40–42 (GHT). Aspartate 13 (proton acceptor) is an active-site residue. Residues aspartate 13 and glycine 40 each coordinate Mg(2+). Residues 13-16 (DEGK), 38-41 (NAGH), threonine 127, arginine 141, glutamine 222, threonine 237, and arginine 301 each bind IMP. Histidine 41 functions as the Proton donor in the catalytic mechanism. A substrate-binding site is contributed by 297–303 (ATTGRPR). GTP contacts are provided by residues arginine 303, 329–331 (KLD), and 411–413 (SLG).

Belongs to the adenylosuccinate synthetase family. In terms of assembly, homodimer. It depends on Mg(2+) as a cofactor.

The protein localises to the cytoplasm. It carries out the reaction IMP + L-aspartate + GTP = N(6)-(1,2-dicarboxyethyl)-AMP + GDP + phosphate + 2 H(+). The protein operates within purine metabolism; AMP biosynthesis via de novo pathway; AMP from IMP: step 1/2. In terms of biological role, plays an important role in the de novo pathway of purine nucleotide biosynthesis. Catalyzes the first committed step in the biosynthesis of AMP from IMP. In Endomicrobium trichonymphae, this protein is Adenylosuccinate synthetase.